Reading from the N-terminus, the 834-residue chain is uncharacterized protein (834 aa).

Disordered regions lie at residues 1-38, 166-280, and 767-787; these read MGSLDYSSKNNSSLGSISSDDESIVLDNENNGAPKAQP, DLSS…TPQE, and ISRVTPSPPGGATKVRENFHP. Low complexity-rich tracts occupy residues 7–18 and 166–252; these read SSKNNSSLGSIS and DLSS…SSSS.

This sequence belongs to the IIV-6 268L family.

This is an uncharacterized protein from Invertebrate iridescent virus 3 (IIV-3).